Consider the following 346-residue polypeptide: GTPase Obg (346 aa).

The Obg domain maps to 1 to 159 (MRFVDRCRLK…RELRLELKVL (159 aa)). The tract at residues 122-147 (KGGRGNLHFKSPHDRAPRRAEPGEPG) is disordered. Basic and acidic residues predominate over residues 132 to 147 (SPHDRAPRRAEPGEPG). Residues 160–336 (ADVGLLGFPN…LVRELAALAR (177 aa)) enclose the OBG-type G domain. Residues 166–173 (GFPNAGKS), 191–195 (FTTLT), 218–221 (DIPG), 288–291 (TKAD), and 317–319 (SAA) contribute to the GTP site. Residues Ser173 and Thr193 each coordinate Mg(2+).

The protein belongs to the TRAFAC class OBG-HflX-like GTPase superfamily. OBG GTPase family. In terms of assembly, monomer. Mg(2+) serves as cofactor.

It localises to the cytoplasm. An essential GTPase which binds GTP, GDP and possibly (p)ppGpp with moderate affinity, with high nucleotide exchange rates and a fairly low GTP hydrolysis rate. Plays a role in control of the cell cycle, stress response, ribosome biogenesis and in those bacteria that undergo differentiation, in morphogenesis control. The protein is GTPase Obg of Sorangium cellulosum (strain So ce56) (Polyangium cellulosum (strain So ce56)).